Consider the following 467-residue polypeptide: ATP synthase subunit beta (467 aa).

150–157 (GGAGVGKT) is a binding site for ATP.

It belongs to the ATPase alpha/beta chains family. As to quaternary structure, F-type ATPases have 2 components, CF(1) - the catalytic core - and CF(0) - the membrane proton channel. CF(1) has five subunits: alpha(3), beta(3), gamma(1), delta(1), epsilon(1). CF(0) has three main subunits: a(1), b(2) and c(9-12). The alpha and beta chains form an alternating ring which encloses part of the gamma chain. CF(1) is attached to CF(0) by a central stalk formed by the gamma and epsilon chains, while a peripheral stalk is formed by the delta and b chains.

The protein localises to the cell inner membrane. It catalyses the reaction ATP + H2O + 4 H(+)(in) = ADP + phosphate + 5 H(+)(out). Functionally, produces ATP from ADP in the presence of a proton gradient across the membrane. The catalytic sites are hosted primarily by the beta subunits. This chain is ATP synthase subunit beta, found in Polaromonas sp. (strain JS666 / ATCC BAA-500).